We begin with the raw amino-acid sequence, 239 residues long: Vesicle-associated protein 1-3 (239 aa).

The residue at position 1 (M1) is an N-acetylmethionine. T2 bears the N-acetylthreonine; in Vesicle-associated protein 1-3, N-terminally processed mark. Residues 2–215 (TTGDLVNIHP…RKETSKKQSG (214 aa)) are Cytoplasmic-facing. The region spanning 6–127 (LVNIHPTELK…EDFKLRVVYI (122 aa)) is the MSP domain. Phosphoserine is present on residues S133 and S164. The stretch at 179–214 (SMISKLTEEKTSATQQSQKLRLELEMLRKETSKKQS) forms a coiled coil. The helical; Anchor for type IV membrane protein transmembrane segment at 216-236 (GHSLLLMLLVGLLGCVIGYLL) threads the bilayer.

This sequence belongs to the VAMP-associated protein (VAP) (TC 9.B.17) family.

The protein resides in the endoplasmic reticulum membrane. Functionally, may play a role in vesicle trafficking. This is Vesicle-associated protein 1-3 (PVA13) from Arabidopsis thaliana (Mouse-ear cress).